The sequence spans 451 residues: Trigger factor (451 aa).

Positions 171–256 (GDRVKVNFKG…ATAIEAPEDK (86 aa)) constitute a PPIase FKBP-type domain.

This sequence belongs to the FKBP-type PPIase family. Tig subfamily.

It is found in the cytoplasm. It carries out the reaction [protein]-peptidylproline (omega=180) = [protein]-peptidylproline (omega=0). Its function is as follows. Involved in protein export. Acts as a chaperone by maintaining the newly synthesized protein in an open conformation. Functions as a peptidyl-prolyl cis-trans isomerase. This chain is Trigger factor, found in Bradyrhizobium sp. (strain ORS 278).